The primary structure comprises 989 residues: R3H domain-containing protein 2 (989 aa).

2 disordered regions span residues 23 to 71 and 106 to 147; these read EESV…AKSN and SCPS…QEYT. The span at 36–56 shows a compositional bias: basic and acidic residues; sequence PSKEEIEKESEDTSLRQETQR. Ser-37 carries the phosphoserine modification. Basic residues predominate over residues 58 to 71; the sequence is TSNHGHARKRAKSN. Positions 109–143 are enriched in basic and acidic residues; it reads SDKEEEKSTKDVSEKEDKDKNKEKVPRRMLSRDSS. Residue Ser-143 is modified to Phosphoserine. An R3H domain is found at 169–232; it reads RMMLLKLEQE…AVIINKTSNT (64 aa). In terms of domain architecture, SUZ spans 233-303; that stretch reads RIPEQRFSEH…VRERIFARET (71 aa). Disordered regions lie at residues 267 to 288, 306 to 390, 416 to 479, 493 to 524, 674 to 738, 751 to 793, and 848 to 867; these read DDNQ…EERE, NGYL…ISRP, TAQQ…FQPP, ASTG…GYMQ, GTSP…PSMV, RGQK…SLSN, and QGQS…LKSA. Positions 277–288 are enriched in basic and acidic residues; the sequence is DGRRSKSIEERE. The span at 320-331 shows a compositional bias: low complexity; that stretch reads SRTSSSRQSSTD. Phosphoserine is present on residues Ser-344, Ser-347, and Ser-363. Residues 416 to 428 show a composition bias toward low complexity; that stretch reads TAQQQQQQQQQLP. Composition is skewed to polar residues over residues 454 to 466 and 493 to 517; these read PFGQ…QGST and ASTG…QQVL. The segment covering 695–704 has biased composition (pro residues); that stretch reads SPSPCSPPQM. Low complexity predominate over residues 705–727; the sequence is PQQYSGVSPSGPGVVVMQLNVPN. The span at 761–771 shows a compositional bias: polar residues; the sequence is PESSPQANTQM. A compositionally biased stretch (low complexity) spans 772–790; it reads SSSPVTSPTQSPAPSPVTS. Residues Ser-866 and Ser-868 each carry the phosphoserine modification. 2 positions are modified to phosphothreonine: Thr-869 and Thr-873.

It localises to the nucleus. This Bos taurus (Bovine) protein is R3H domain-containing protein 2 (R3HDM2).